A 1300-amino-acid polypeptide reads, in one-letter code: Nephrocystin-3 (1300 aa).

Positions 82-183 (KNNEVASMQK…LQRLQAQGIQ (102 aa)) form a coiled coil. TPR repeat units lie at residues 443–476 (TMED…ICEL), 916–949 (ADLY…RETA), 958–991 (AQSL…SENA), 1000–1033 (AREL…RQKS), 1066–1099 (ARTL…RERV), 1108–1141 (AQSI…RRRA), 1150–1183 (AYTV…RQKS), 1192–1225 (ATAL…YEDS), and 1234–1267 (GETL…KETE). The disordered stretch occupies residues 1268–1288 (TSVLGAKAPSGHSSSGGDTYS). A compositionally biased stretch (polar residues) spans 1278–1288 (GHSSSGGDTYS).

It is found in the cell projection. Its subcellular location is the cilium. In terms of biological role, required for normal ciliary development and function. Inhibits disheveled-1-induced canonical Wnt-signaling activity and may also play a role in the control of non-canonical Wnt signaling that regulates planar cell polarity. Probably acts as a molecular switch between different Wnt signaling pathways. Required for proper convergent extension cell movements. The polypeptide is Nephrocystin-3 (nphp3) (Xenopus laevis (African clawed frog)).